The sequence spans 92 residues: Small ribosomal subunit protein bS18 (92 aa).

This sequence belongs to the bacterial ribosomal protein bS18 family. As to quaternary structure, part of the 30S ribosomal subunit. Forms a tight heterodimer with protein bS6.

Functionally, binds as a heterodimer with protein bS6 to the central domain of the 16S rRNA, where it helps stabilize the platform of the 30S subunit. The protein is Small ribosomal subunit protein bS18 of Chlorobium chlorochromatii (strain CaD3).